A 332-amino-acid chain; its full sequence is D-2-hydroxyacid dehydrogenase (NAD(+)) (332 aa).

Catalysis depends on residues Arg-237 and Glu-266. His-298 acts as the Proton donor in catalysis.

This sequence belongs to the D-isomer specific 2-hydroxyacid dehydrogenase family. As to quaternary structure, monomer.

The catalysed reaction is a (2R)-2-hydroxycarboxylate + NAD(+) = a 2-oxocarboxylate + NADH + H(+). It carries out the reaction (2R)-hydroxy-4-methylpentanoate + NAD(+) = 4-methyl-2-oxopentanoate + NADH + H(+). The protein operates within amino-acid degradation; L-leucine degradation. In terms of biological role, involved in the reductive branch of L-leucine fermentation. Catalyzes the NADH-dependent reduction of 4-methyl-2-oxopentanoate (2-oxoisocaproate) to (R)-2-hydroxy-4-methylpentanoate ((R)-2-hydroxyisocaproate). For the reverse reaction, the enzyme accepts (R)- but not (S)-2-hydroxy-4-methylpentanoate. Can also use 2-oxopentanoate, 2-oxohexanoate and phenylpyruvate but not 2-oxoisovalerate and 2-oxobutyrate. Cannot use NADPH. This chain is D-2-hydroxyacid dehydrogenase (NAD(+)), found in Clostridioides difficile (Peptoclostridium difficile).